The sequence spans 700 residues: Receptor-type tyrosine-protein phosphatase epsilon (700 aa).

Residues 1-19 (MEPLCPLLLVGFSLPLARA) form the signal peptide. At 20–46 (LRGNETTADSNETTTTSGPPDPGASQP) the chain is on the extracellular side. Residues Asn-23 and Asn-30 are each glycosylated (N-linked (GlcNAc...) asparagine). A helical membrane pass occupies residues 47–69 (LLAWLLLPLLLLLLVLLLAAYFF). Residues 70–700 (RFRKQRKAVV…DIFSDYANFK (631 aa)) are Cytoplasmic-facing. 2 consecutive Tyrosine-protein phosphatase domains span residues 135-394 (FREE…LLEY) and 426-689 (LEEE…VQDF). Residues Asp-303, 335 to 341 (CSAGVGR), and Gln-379 each bind substrate. Cys-335 (phosphocysteine intermediate) is an active-site residue. Residue Cys-630 is the Phosphocysteine intermediate of the active site. Tyr-696 is subject to Phosphotyrosine.

This sequence belongs to the protein-tyrosine phosphatase family. Receptor class 4 subfamily. In terms of assembly, monomer. Isoform 2: Homodimer. Can form oligomers. Dimerization is increased by oxidative stress and decreased by EGFR. Isoform 2 interacts with GRB2. A catalytically active cytoplasmic form (p65) is produced by proteolytic cleavage of either isoform 1, isoform 2 or isoform 3. Post-translationally, isoform 1 and isoform 2 are phosphorylated on tyrosine residues by tyrosine kinase Neu. In terms of processing, isoform 1 is glycosylated. In terms of tissue distribution, expressed in giant cell tumor (osteoclastoma rich in multinucleated osteoclastic cells).

It localises to the cell membrane. Its subcellular location is the cytoplasm. The catalysed reaction is O-phospho-L-tyrosyl-[protein] + H2O = L-tyrosyl-[protein] + phosphate. Functionally, isoform 1 plays a critical role in signaling transduction pathways and phosphoprotein network topology in red blood cells. May play a role in osteoclast formation and function. In terms of biological role, isoform 2 acts as a negative regulator of insulin receptor (IR) signaling in skeletal muscle. Regulates insulin-induced tyrosine phosphorylation of insulin receptor (IR) and insulin receptor substrate 1 (IRS-1), phosphorylation of protein kinase B and glycogen synthase kinase-3 and insulin induced stimulation of glucose uptake. Isoform 1 and isoform 2 act as a negative regulator of FceRI-mediated signal transduction leading to cytokine production and degranulation, most likely by acting at the level of SYK to affect downstream events such as phosphorylation of SLP76 and LAT and mobilization of Ca(2+). This is Receptor-type tyrosine-protein phosphatase epsilon (PTPRE) from Homo sapiens (Human).